Consider the following 484-residue polypeptide: MYKGWDSEALSIQSEIVNEILLYCYLTPQPPIPSETTTATSPTNIENEISNLESSENLEELKRLSVALNIDRRCNICSIVNLCLKQNKSWIYDYSLLCYKCNYAPKTPLSLLIVSAEFIMLIRERFPNINFDGLFQNNIVSIFDFHVHFFIHRCFANTVNDHIQSENITLNHMAIIRSTLLKEDSIPHIKIKKFLTKKMNPKKTQSPELNKKLTVPMKTRFTTLLFYMWSGTNVFDRVPFTDLTIRKHRFIKNLYSNKTDIELTAGPILLAQIPFSITKNKTTSVCLLCELMAASKQDYLFLKYLHQSIMDYCQNNLKMIDRVQFVIADIFEKTKIHMHVKNLSDYSKAIFDNEFSFSDDNFTLDTHVYLILRQTGTVGVYKHFFCDPLCLANCKTINPEVLFNTTDAGEIQDLKVTICYRNEYLSIVEKHVWLAIHLFKAFQIIKPNHKNKTQIAEFLKDFTNLLALHHFDIVDPIFTVNYYV.

Residues C74, C77, H148, C154, C286, C289, H383, and C390 each contribute to the Zn(2+) site. Zinc finger regions lie at residues 74 to 154 (CNIC…IHRC) and 286 to 390 (CLLC…DPLC).

This sequence belongs to the herpesviridae UL32 protein family.

The protein resides in the host cytoplasm. Its subcellular location is the host nucleus. Its function is as follows. Plays a role in efficient localization of neo-synthesized capsids to nuclear replication compartments, thereby controlling cleavage and packaging of virus genomic DNA. In Homo sapiens (Human), this protein is Packaging protein UL32 homolog (U36).